Consider the following 378-residue polypeptide: Heat-inducible transcription repressor HrcA (378 aa).

Belongs to the HrcA family.

Functionally, negative regulator of class I heat shock genes (grpE-dnaK-dnaJ and groELS operons). Prevents heat-shock induction of these operons. The chain is Heat-inducible transcription repressor HrcA from Synechocystis sp. (strain ATCC 27184 / PCC 6803 / Kazusa).